The chain runs to 367 residues: Probable outer membrane usher protein LpfC (367 aa).

The signal sequence occupies residues 1 to 30 (MSRKTVSRTFSSFSISVVAVAVASTFSAHA).

Belongs to the fimbrial export usher family.

The protein localises to the cell outer membrane. Its function is as follows. Part of the lpfABCC'DE fimbrial operon. LP fimbriae may participate in the interaction with eukaryotic cells by assisting in microcolony formation. Could be involved in the export and assembly of the fimbrial subunits across the outer membrane. This chain is Probable outer membrane usher protein LpfC (lpfC), found in Escherichia coli O157:H7.